The following is a 203-amino-acid chain: N-(5'-phosphoribosyl)anthranilate isomerase (203 aa).

It belongs to the TrpF family.

It catalyses the reaction N-(5-phospho-beta-D-ribosyl)anthranilate = 1-(2-carboxyphenylamino)-1-deoxy-D-ribulose 5-phosphate. It functions in the pathway amino-acid biosynthesis; L-tryptophan biosynthesis; L-tryptophan from chorismate: step 3/5. In Thermoanaerobacter pseudethanolicus (strain ATCC 33223 / 39E) (Clostridium thermohydrosulfuricum), this protein is N-(5'-phosphoribosyl)anthranilate isomerase.